Consider the following 575-residue polypeptide: Alpha-(1,6)-fucosyltransferase (575 aa).

The Cytoplasmic portion of the chain corresponds to Met-1 to Arg-9. Residues Trp-10–Val-30 form a helical; Signal-anchor for type II membrane protein membrane-spanning segment. Residues Arg-31–Lys-575 lie on the Lumenal side of the membrane. Cystine bridges form between Cys-204–Cys-266, Cys-212–Cys-230, and Cys-218–Cys-222. In terms of domain architecture, GT23 spans Lys-206–Leu-493. A Phosphoserine modification is found at Ser-278. Residues Pro-299–Pro-305 carry the SH3-binding motif. Positions Arg-365–Arg-366 are important for donor substrate binding. A disulfide bridge connects residues Cys-465 and Cys-472. The SH3 domain occupies Gln-502–Glu-563.

This sequence belongs to the glycosyltransferase 23 family. Post-translationally, tyrosine phosphorylated by PKDCC/VLK.

Its subcellular location is the golgi apparatus. The protein resides in the golgi stack membrane. The catalysed reaction is N(4)-{beta-D-GlcNAc-(1-&gt;2)-alpha-D-Man-(1-&gt;3)-[beta-D-GlcNAc-(1-&gt;2)-alpha-D-Man-(1-&gt;6)]-beta-D-Man-(1-&gt;4)-beta-D-GlcNAc-(1-&gt;4)-beta-D-GlcNAc}-L-asparaginyl-[protein] + GDP-beta-L-fucose = an N(4)-{beta-D-GlcNAc-(1-&gt;2)-alpha-D-Man-(1-&gt;3)-[beta-D-GlcNAc-(1-&gt;2)-alpha-D-Man-(1-&gt;6)]-beta-D-Man-(1-&gt;4)-beta-D-GlcNAc-(1-&gt;4)-[alpha-L-Fuc-(1-&gt;6)]-beta-D-GlcNAc}-L-asparaginyl-[protein] + GDP + H(+). The protein operates within protein modification; protein glycosylation. Functionally, catalyzes the addition of fucose in alpha 1-6 linkage to the first GlcNAc residue, next to the peptide chains in N-glycans. The sequence is that of Alpha-(1,6)-fucosyltransferase (FUT8) from Homo sapiens (Human).